The following is a 498-amino-acid chain: MASQGTKRSYEQMETDGERQNATEIRASVGKMIDGIGRFYIQMCTELKLSDYEGRLIQNSLTIERMVLSAFDERRNRYLEEHPSAGKDPKKTGGPIYRRVGGKWIRELILYDKEEIRRIWRQANNGDDATRGLTHMMIWHSNLNDATYQRTRALVRTGMDPRMCSLMQGSTLPRRSGAAGAAVKGVGTMVMELIRMIKRGINDRNFWRGENGRKTRSAYERMCNILKGKFQTAAQRAMMDQVRESRNPGNAEIEDLIFSARSALILRGSVAHKSCLPACVYGPAVSSGYDFEKEGYSLVGIDPFKLLQNSQVYSLIRPNENPAHKSQLVWMACHSAAFEDLRLLSFIRGTKVSPRGKLSTRGVQIASNENMDTMESSTLELRSRYWAIRTRSGGNTNQQRASAGQISVQPTFSVQRNLPFDKSTVMAAFTGNTEGRTSDMRAEIIRMMENAKPEEVSFRGRGVFELSDEKATNPIVPSFDMSNEGSYFFGDNAEEYDN.

Positions Met-1–Glu-18 match the Unconventional nuclear localization signal motif. The disordered stretch occupies residues Met-1 to Asn-21. Residues Arg-8 to Asn-21 show a composition bias toward basic and acidic residues. Positions Lys-198 to Arg-216 match the Bipartite nuclear localization signal motif.

Belongs to the influenza viruses nucleoprotein family. In terms of assembly, homomultimerizes to form the nucleocapsid. May bind host exportin-1/XPO1. Binds to viral genomic RNA. Protein-RNA contacts are mediated by a combination of electrostatic interactions between positively charged residues and the phosphate backbone and planar interactions between aromatic side chains and bases. Post-translationally, late in virus-infected cells, may be cleaved from a 56-kDa protein to a 53-kDa protein by a cellular caspase. This cleavage might be a marker for the onset of apoptosis in infected cells or have a specific function in virus host interaction.

It is found in the virion. The protein localises to the host nucleus. Encapsidates the negative strand viral RNA, protecting it from nucleases. The encapsidated genomic RNA is termed the ribonucleoprotein (RNP) and serves as template for transcription and replication. The RNP needs to be localized in the host nucleus to start an infectious cycle, but is too large to diffuse through the nuclear pore complex. NP comprises at least 2 nuclear localization signals that are responsible for the active RNP import into the nucleus through cellular importin alpha/beta pathway. Later in the infection, nclear export of RNPs are mediated through viral proteins NEP interacting with M1 which binds nucleoproteins. It is possible that nucleoprotein binds directly host exportin-1/XPO1 and plays an active role in RNPs nuclear export. M1 interaction with RNP seems to hide nucleoprotein's nuclear localization signals. Soon after a virion infects a new cell, M1 dissociates from the RNP under acidification of the virion driven by M2 protein. Dissociation of M1 from RNP unmasks nucleoprotein's nuclear localization signals, targeting the RNP to the nucleus. The sequence is that of Nucleoprotein from Aves (whales).